We begin with the raw amino-acid sequence, 2432 residues long: uncharacterized protein (2432 aa).

Belongs to the IIV-6 261R/396L/443R family.

This is an uncharacterized protein from Invertebrate iridescent virus 6 (IIV-6).